A 317-amino-acid chain; its full sequence is Acetyl-coenzyme A carboxylase carboxyl transferase subunit alpha (317 aa).

Residues 32 to 293 (NLSEEIARLE…KRLLTSELQA (262 aa)) enclose the CoA carboxyltransferase C-terminal domain.

This sequence belongs to the AccA family. As to quaternary structure, acetyl-CoA carboxylase is a heterohexamer composed of biotin carboxyl carrier protein (AccB), biotin carboxylase (AccC) and two subunits each of ACCase subunit alpha (AccA) and ACCase subunit beta (AccD).

The protein localises to the cytoplasm. It carries out the reaction N(6)-carboxybiotinyl-L-lysyl-[protein] + acetyl-CoA = N(6)-biotinyl-L-lysyl-[protein] + malonyl-CoA. The protein operates within lipid metabolism; malonyl-CoA biosynthesis; malonyl-CoA from acetyl-CoA: step 1/1. Its function is as follows. Component of the acetyl coenzyme A carboxylase (ACC) complex. First, biotin carboxylase catalyzes the carboxylation of biotin on its carrier protein (BCCP) and then the CO(2) group is transferred by the carboxyltransferase to acetyl-CoA to form malonyl-CoA. This is Acetyl-coenzyme A carboxylase carboxyl transferase subunit alpha from Legionella pneumophila (strain Paris).